The sequence spans 437 residues: Lipid II isoglutaminyl synthase (glutamine-hydrolyzing) subunit MurT (437 aa).

Cys202, Cys205, Cys224, and Cys226 together coordinate Zn(2+). Asp349 is a catalytic residue.

It belongs to the MurCDEF family. MurT subfamily. Forms a heterodimer with GatD.

It carries out the reaction beta-D-GlcNAc-(1-&gt;4)-Mur2Ac(oyl-L-Ala-gamma-D-Glu-L-Lys-D-Ala-D-Ala)-di-trans,octa-cis-undecaprenyl diphosphate + L-glutamine + ATP + H2O = beta-D-GlcNAc-(1-&gt;4)-Mur2Ac(oyl-L-Ala-D-isoglutaminyl-L-Lys-D-Ala-D-Ala)-di-trans,octa-cis-undecaprenyl diphosphate + L-glutamate + ADP + phosphate + H(+). The catalysed reaction is beta-D-GlcNAc-(1-&gt;4)-Mur2Ac(oyl-L-Ala-gamma-D-Glu-L-Lys-D-Ala-D-Ala)-di-trans,octa-cis-undecaprenyl diphosphate + ATP = beta-D-GlcNAc-(1-&gt;4)-Mur2Ac(oyl-L-Ala-gamma-D-O-P-Glu-L-Lys-D-Ala-D-Ala)-di-trans,octa-cis-undecaprenyl diphosphate + ADP. It catalyses the reaction beta-D-GlcNAc-(1-&gt;4)-Mur2Ac(oyl-L-Ala-gamma-D-O-P-Glu-L-Lys-D-Ala-D-Ala)-di-trans,octa-cis-undecaprenyl diphosphate + NH4(+) = beta-D-GlcNAc-(1-&gt;4)-Mur2Ac(oyl-L-Ala-D-isoglutaminyl-L-Lys-D-Ala-D-Ala)-di-trans,octa-cis-undecaprenyl diphosphate + phosphate + H(+). The protein operates within cell wall biogenesis; peptidoglycan biosynthesis. The lipid II isoglutaminyl synthase complex catalyzes the formation of alpha-D-isoglutamine in the cell wall lipid II stem peptide. The MurT subunit catalyzes the ATP-dependent amidation of D-glutamate residue of lipid II, converting it to an isoglutamine residue. This Staphylococcus aureus (strain COL) protein is Lipid II isoglutaminyl synthase (glutamine-hydrolyzing) subunit MurT.